The chain runs to 400 residues: Putative F-box protein At5g41510 (400 aa).

The F-box domain occupies A2 to V47.

This chain is Putative F-box protein At5g41510, found in Arabidopsis thaliana (Mouse-ear cress).